The primary structure comprises 668 residues: Packaging protein UL32 homolog (668 aa).

Residues 1–10 (MNPSTHVSSN) show a composition bias toward polar residues. The disordered stretch occupies residues 1-35 (MNPSTHVSSNGPTTPPHGPHTTFLPPTSPAPSTSS). Low complexity predominate over residues 19-35 (PHTTFLPPTSPAPSTSS). 4 residues coordinate Zn(2+): Cys-200, Cys-203, His-276, and Cys-282. Positions 200 to 282 (CNLCAIISIC…FHLHFFINRC (83 aa)) are zinc finger 1. Composition is skewed to basic and acidic residues over residues 392-401 (SEREDARMMM) and 410-419 (GEKGGDDPGR). The interval 392 to 430 (SEREDARMMMEEEEDEEGGEKGGDDPGRHNGGGTSGGFS) is disordered. Positions 459, 462, 567, and 574 each coordinate Zn(2+). A zinc finger 2 region spans residues 459 to 574 (CLLCELMACS…YKHFFCDPQC (116 aa)).

This sequence belongs to the herpesviridae UL32 protein family.

It is found in the host cytoplasm. The protein resides in the host nucleus. Functionally, plays a role in efficient localization of neo-synthesized capsids to nuclear replication compartments, thereby controlling cleavage and packaging of virus genomic DNA. In Homo sapiens (Human), this protein is Packaging protein UL32 homolog (UL52).